Here is a 463-residue protein sequence, read N- to C-terminus: Argininosuccinate lyase (463 aa).

It belongs to the lyase 1 family. Argininosuccinate lyase subfamily.

The protein localises to the cytoplasm. The catalysed reaction is 2-(N(omega)-L-arginino)succinate = fumarate + L-arginine. The protein operates within amino-acid biosynthesis; L-arginine biosynthesis; L-arginine from L-ornithine and carbamoyl phosphate: step 3/3. The chain is Argininosuccinate lyase from Bacillus cereus (strain AH187).